We begin with the raw amino-acid sequence, 70 residues long: Large ribosomal subunit protein uL29 (70 aa).

This sequence belongs to the universal ribosomal protein uL29 family.

This Clostridium botulinum (strain ATCC 19397 / Type A) protein is Large ribosomal subunit protein uL29.